We begin with the raw amino-acid sequence, 271 residues long: uncharacterized protein (271 aa).

This is an uncharacterized protein from Saccharomyces cerevisiae (strain ATCC 204508 / S288c) (Baker's yeast).